A 363-amino-acid chain; its full sequence is DNA replication and repair protein RecF (363 aa).

An ATP-binding site is contributed by 30-37 (GINGSGKS).

It belongs to the RecF family.

The protein localises to the cytoplasm. The RecF protein is involved in DNA metabolism; it is required for DNA replication and normal SOS inducibility. RecF binds preferentially to single-stranded, linear DNA. It also seems to bind ATP. The polypeptide is DNA replication and repair protein RecF (Pseudoalteromonas atlantica (strain T6c / ATCC BAA-1087)).